The chain runs to 181 residues: MSLTKSLLFTLLLSAAAVQASTRDEIERLWNPQGMATQPAQPAAGTSARTAKPAPRWFRLSNGRQVNLADWKVVLFMQGHCPYCHQFDPVLKQLAQQYGFSVFSYTLDGQGDTAFPEALPVPPDVMQTFFPNIPVATPTTFLVNVNTLEALPLLQGATDAAGFMARVDTVLQMYGGKKGAK.

An N-terminal signal peptide occupies residues 1 to 22 (MSLTKSLLFTLLLSAAAVQAST). The region spanning 37 to 172 (TQPAQPAAGT…FMARVDTVLQ (136 aa)) is the Thioredoxin domain.

Its subcellular location is the periplasm. The sequence is that of Protein TrbB (trbB) from Escherichia coli (strain K12).